Consider the following 418-residue polypeptide: Putative ion-transport protein YfeO (418 aa).

The next 12 helical transmembrane spans lie at 10 to 30, 54 to 74, 99 to 119, 120 to 140, 149 to 169, 186 to 206, 223 to 243, 258 to 278, 300 to 320, 322 to 342, 343 to 363, and 371 to 391; these read LLLS…LIVV, DSPL…GLVI, ALPG…SLGP, EHPI…RLLP, ILAS…AALI, LFAP…FFHP, ILSG…AVWC, VLVL…GGPV, DYFL…ASGF, GGRI…LHEH, VPAV…VLVV, and LFMA…CIVM.

This sequence belongs to the chloride channel (TC 2.A.49) family.

It localises to the cell membrane. This is Putative ion-transport protein YfeO from Shigella boydii serotype 18 (strain CDC 3083-94 / BS512).